Here is a 409-residue protein sequence, read N- to C-terminus: Proteasome-activating nucleotidase (409 aa).

The tract at residues 1 to 22 (MTLSSAGGSRSHRHNGGHSERD) is disordered. A coiled-coil region spans residues 23-58 (VEIRILKDKVRSLTKEKISLQKELEYYKNEITKLLS). ATP-binding positions include 183–188 (GTGKTL) and H322.

This sequence belongs to the AAA ATPase family. As to quaternary structure, homohexamer. The hexameric complex has a two-ring architecture resembling a top hat that caps the 20S proteasome core at one or both ends. Upon ATP-binding, the C-terminus of PAN interacts with the alpha-rings of the proteasome core by binding to the intersubunit pockets.

The protein localises to the cytoplasm. ATPase which is responsible for recognizing, binding, unfolding and translocation of substrate proteins into the archaeal 20S proteasome core particle. Is essential for opening the gate of the 20S proteasome via an interaction with its C-terminus, thereby allowing substrate entry and access to the site of proteolysis. Thus, the C-termini of the proteasomal ATPase function like a 'key in a lock' to induce gate opening and therefore regulate proteolysis. Unfolding activity requires energy from ATP hydrolysis, whereas ATP binding alone promotes ATPase-20S proteasome association which triggers gate opening, and supports translocation of unfolded substrates. In Aeropyrum pernix (strain ATCC 700893 / DSM 11879 / JCM 9820 / NBRC 100138 / K1), this protein is Proteasome-activating nucleotidase.